A 462-amino-acid polypeptide reads, in one-letter code: Siroheme synthase (462 aa).

The precorrin-2 dehydrogenase /sirohydrochlorin ferrochelatase stretch occupies residues 1–203 (MQYFPIFVDT…GNNSKAEQMM (203 aa)). NAD(+)-binding positions include 22–23 (EV) and 43–44 (PW). At Ser-128 the chain carries Phosphoserine. The tract at residues 217 to 462 (GEVYLVGAGP…EKLNWFGADA (246 aa)) is uroporphyrinogen-III C-methyltransferase. Residue Pro-226 participates in S-adenosyl-L-methionine binding. Asp-249 functions as the Proton acceptor in the catalytic mechanism. Lys-271 serves as the catalytic Proton donor. S-adenosyl-L-methionine-binding positions include 302-304 (GGD), Ile-307, 332-333 (TA), Met-384, and Ala-413.

In the N-terminal section; belongs to the precorrin-2 dehydrogenase / sirohydrochlorin ferrochelatase family. The protein in the C-terminal section; belongs to the precorrin methyltransferase family.

It catalyses the reaction uroporphyrinogen III + 2 S-adenosyl-L-methionine = precorrin-2 + 2 S-adenosyl-L-homocysteine + H(+). It carries out the reaction precorrin-2 + NAD(+) = sirohydrochlorin + NADH + 2 H(+). The catalysed reaction is siroheme + 2 H(+) = sirohydrochlorin + Fe(2+). Its pathway is cofactor biosynthesis; adenosylcobalamin biosynthesis; precorrin-2 from uroporphyrinogen III: step 1/1. It participates in cofactor biosynthesis; adenosylcobalamin biosynthesis; sirohydrochlorin from precorrin-2: step 1/1. It functions in the pathway porphyrin-containing compound metabolism; siroheme biosynthesis; precorrin-2 from uroporphyrinogen III: step 1/1. The protein operates within porphyrin-containing compound metabolism; siroheme biosynthesis; siroheme from sirohydrochlorin: step 1/1. Its pathway is porphyrin-containing compound metabolism; siroheme biosynthesis; sirohydrochlorin from precorrin-2: step 1/1. In terms of biological role, multifunctional enzyme that catalyzes the SAM-dependent methylations of uroporphyrinogen III at position C-2 and C-7 to form precorrin-2 via precorrin-1. Then it catalyzes the NAD-dependent ring dehydrogenation of precorrin-2 to yield sirohydrochlorin. Finally, it catalyzes the ferrochelation of sirohydrochlorin to yield siroheme. The chain is Siroheme synthase from Pseudoalteromonas atlantica (strain T6c / ATCC BAA-1087).